The primary structure comprises 366 residues: Chorismate synthase (366 aa).

Residues arginine 48 and arginine 54 each contribute to the NADP(+) site. Residues arginine 125–serine 127, asparagine 237–alanine 238, glycine 277, lysine 292–serine 296, and arginine 318 contribute to the FMN site.

It belongs to the chorismate synthase family. As to quaternary structure, homotetramer. FMNH2 is required as a cofactor.

It catalyses the reaction 5-O-(1-carboxyvinyl)-3-phosphoshikimate = chorismate + phosphate. It functions in the pathway metabolic intermediate biosynthesis; chorismate biosynthesis; chorismate from D-erythrose 4-phosphate and phosphoenolpyruvate: step 7/7. Catalyzes the anti-1,4-elimination of the C-3 phosphate and the C-6 proR hydrogen from 5-enolpyruvylshikimate-3-phosphate (EPSP) to yield chorismate, which is the branch point compound that serves as the starting substrate for the three terminal pathways of aromatic amino acid biosynthesis. This reaction introduces a second double bond into the aromatic ring system. The protein is Chorismate synthase of Acidovorax ebreus (strain TPSY) (Diaphorobacter sp. (strain TPSY)).